A 400-amino-acid polypeptide reads, in one-letter code: Haptoglobin (400 aa).

A signal peptide spans 1 to 18 (MSALPVVVTLLLCGQLLA). 2 consecutive Sushi domains span residues 28–83 (DSCP…ECED) and 84–141 (ASCP…ECEA). Cystine bridges form between Cys49–Cys81, Cys105–Cys139, and Cys143–Cys260. The region spanning 156–398 (IIGGSLDAKG…ILDWVRKTIA (243 aa)) is the Peptidase S1 domain. Residues Asn285, Asn309, and Asn315 are each glycosylated (N-linked (GlcNAc...) asparagine). 2 disulfides stabilise this stretch: Cys303–Cys334 and Cys345–Cys375. An interaction with CD163 region spans residues 312–317 (VPENKT).

It belongs to the peptidase S1 family. Tetramer of two alpha and two beta chains; disulfide-linked. The hemoglobin/haptoglobin complex is composed of a haptoglobin dimer bound to two hemoglobin alpha-beta dimers. Interacts with CD163. Interacts with ERGIC3. Expressed by the liver and secreted in plasma.

It is found in the secreted. The protein localises to the extracellular space. As a result of hemolysis, hemoglobin is found to accumulate in the kidney and is secreted in the urine. Haptoglobin captures, and combines with free plasma hemoglobin to allow hepatic recycling of heme iron and to prevent kidney damage. Haptoglobin also acts as an antioxidant, has antibacterial activity and plays a role in modulating many aspects of the acute phase response. Hemoglobin/haptoglobin complexes are rapidly cleared by the macrophage CD163 scavenger receptor expressed on the surface of liver Kupfer cells through an endocytic lysosomal degradation pathway. The sequence is that of Haptoglobin (HP) from Cervus elaphus (Red deer).